A 1517-amino-acid polypeptide reads, in one-letter code: Neurite extension and migration factor (1517 aa).

Residues 381–405 are compositionally biased toward basic and acidic residues; sequence DKKKGKEEVHEDKSIEKKDEKDNGE. Disordered regions lie at residues 381–416, 505–529, 644–697, 732–775, 1065–1084, 1161–1228, and 1372–1422; these read DKKKGKEEVHEDKSIEKKDEKDNGEKPALNNKPCSG, VNERKEWPPGGSKEEDDDEWCPKKR, SMEA…GLIG, KKIK…HMSE, RHSSLSEMSPPDTPSLSPQS, DEPA…KKGK, and AGTP…SSED. Residues 644–663 show a composition bias toward polar residues; the sequence is SMEASASSKQVSFGSDQKQA. Low complexity predominate over residues 678 to 687; it reads SALLAAPSSA. Residues 764-773 are compositionally biased toward polar residues; that stretch reads TPGTSNSSHM.

The protein localises to the nucleus. It localises to the cytoplasm. Its function is as follows. Involved in neurite outgrowth by regulating cell-cell adhesion via the N-cadherin signaling pathway. May act by regulating expression of protein-coding genes, such as N-cadherins and integrin beta-1 (ITGB1). This Rattus norvegicus (Rat) protein is Neurite extension and migration factor.